The primary structure comprises 200 residues: Inducible T-cell costimulator (200 aa).

Residues 1-20 form the signal peptide; that stretch reads MKPYFCRVFVFCFLIRLLTG. Residues 21–144 lie on the Extracellular side of the membrane; it reads EINGSADHRM…QLCCQLKLWL (124 aa). Asn-23 carries N-linked (GlcNAc...) asparagine glycosylation. The 104-residue stretch at 30 to 133 folds into the Ig-like V-type domain; it reads MFSFHNGGVQ…LSGGYLHIYE (104 aa). 2 disulfides stabilise this stretch: Cys-42–Cys-109 and Cys-63–Cys-83. N-linked (GlcNAc...) asparagine glycans are attached at residues Asn-89 and Asn-123. A helical transmembrane segment spans residues 145 to 165; sequence PVGCAAFVVVLLFGCILIIWF. The Cytoplasmic segment spans residues 166-200; it reads SKKKYGSSVHDPNSEYMFMAAVNTNKKSRLAGVTS.

As to quaternary structure, homodimer; disulfide-linked. Interacts with ICOSLG. Interacts with PIK3R1. Interacts with TBK1; this interaction is critical for the maturation of T follicular regulatory cells. In terms of processing, N-glycosylated. In terms of tissue distribution, expressed on activated T-cells and resting memory T-cells. High expression seen in the thymic medulla and in the germinal centers and T-cell zones of lymph nodes and Peyer patches. Expressed at low levels in the spleen.

The protein localises to the cell membrane. Its function is as follows. Stimulatory receptor expressed in activated or antigen-experienced T-cells that plays an important role in the immune response. Upon binding to its ligand ICOSL expressed on antigen presenting cells (APCs), delivers costimulatory signals that enhances all basic T-cell responses to a foreign antigen, namely proliferation, secretion of lymphokines including IL10, up-regulation of molecules that mediate cell-cell interaction, and effective help for antibody secretion by B-cells. Also acts as a costimulatory receptor critical for the differentiation of T follicular regulatory cells upon immune challenges such as viral infection. Mechanistically, potentiates TCR-induced calcium flux by augmenting PLCG1 activation and actin remodeling. In addition, activates PI3K signaling pathways independently of calcium flux. Essential both for efficient interaction between T and B-cells and for normal antibody responses to T-cell dependent antigens. Prevents the apoptosis of pre-activated T-cells. Plays a critical role in CD40-mediated class switching of immunoglobin isotypes. The chain is Inducible T-cell costimulator (Icos) from Mus musculus (Mouse).